Consider the following 326-residue polypeptide: UDP-N-acetylglucosamine transporter (326 aa).

The next 8 helical transmembrane spans lie at 8-24, 42-58, 138-154, 174-190, 210-226, 247-263, 269-285, and 296-312; these read LSLG…VLTM, AVVV…ILLV, VYQW…VAFV, FVGL…SGFA, IQLG…GVYI, IVVI…AAVI, ILKG…STLI, and TSVF…ATFL.

This sequence belongs to the nucleotide-sugar transporter family. SLC35A subfamily. As to quaternary structure, interacts with SLC35A2; the interaction is reduced in the presence of SLC35A4. Found in a complex with SLC35A2 and SLC35A4.

Its subcellular location is the golgi apparatus membrane. Functionally, uridine diphosphate-N-acetylglucosamine (UDP-GlcNAc) transporter in the Golgi apparatus. May supply UDP-GlcNAc as substrate for Golgi-resident glycosyltransferases that generate branching of diantennary oligosaccharides. This Canis lupus familiaris (Dog) protein is UDP-N-acetylglucosamine transporter (SLC35A3).